A 598-amino-acid polypeptide reads, in one-letter code: Probable ATP-dependent RNA helicase DDX52 (598 aa).

N6-acetyllysine is present on Lys15. Ser39 is modified (phosphoserine). Positions 166–194 (QLDQEYKINSRLLQNILDAGFQVPTPIQM) match the Q motif motif. The Helicase ATP-binding domain occupies 197 to 375 (IPVMLHGREL…KLNLDNVVSV (179 aa)). 210–217 (APTGSGKT) contributes to the ATP binding site. The DEAD box motif lies at 319 to 322 (DESD). Residues 386–547 (TVEQELLFVG…PVPEYIKGFQ (162 aa)) form the Helicase C-terminal domain.

This sequence belongs to the DEAD box helicase family. DDX52/ROK1 subfamily.

The protein localises to the nucleus. It is found in the nucleolus. The catalysed reaction is ATP + H2O = ADP + phosphate + H(+). Its function is as follows. Required for efficient ribosome biogenesis. May control cell cycle progression by regulating translation of mRNAs that contain a terminal oligo pyrimidine (TOP) motif in their 5' UTRs, such as GTPBP4. In Mus musculus (Mouse), this protein is Probable ATP-dependent RNA helicase DDX52 (Ddx52).